A 255-amino-acid polypeptide reads, in one-letter code: tRNA (guanine-N(1)-)-methyltransferase (255 aa).

Residues G113 and 133–138 each bind S-adenosyl-L-methionine; that span reads IGDYVL.

Belongs to the RNA methyltransferase TrmD family. As to quaternary structure, homodimer.

Its subcellular location is the cytoplasm. The enzyme catalyses guanosine(37) in tRNA + S-adenosyl-L-methionine = N(1)-methylguanosine(37) in tRNA + S-adenosyl-L-homocysteine + H(+). Specifically methylates guanosine-37 in various tRNAs. In Klebsiella pneumoniae (strain 342), this protein is tRNA (guanine-N(1)-)-methyltransferase.